The chain runs to 1897 residues: 1,3-beta-glucan synthase component FKS1 (1897 aa).

Residues 1 to 106 (MSGYPAGHYE…SETFSDFTMR (106 aa)) are disordered. Over residues 8–29 (HYEDGYGHQEHGGDAYYQDEHG) the composition is skewed to basic and acidic residues. Low complexity predominate over residues 74–83 (GDQYYDQGNG). 17 consecutive transmembrane segments (helical) span residues 487-507 (IWVI…PTLY), 525-545 (WSAV…ATLC), 564-584 (LMFL…VFGF), 591-611 (TICL…FFFF), 655-675 (LWIC…TLSL), 707-727 (ILLG…SYLW), 728-748 (YVIC…VSIW), 1329-1349 (NMFI…LGAL), 1386-1406 (CVVS…VQEL), 1473-1493 (FAGP…FATS), 1497-1517 (TPAL…PFLF), 1588-1608 (IFFS…VPYL), 1630-1650 (IAIV…MFFG), 1666-1686 (FGAV…LVIF), 1701-1721 (VLGM…IISL), 1766-1786 (FSAD…ALCI), and 1826-1846 (FAIL…APLV).

It belongs to the glycosyltransferase 48 family. Component of the 1,3-beta-glucan synthase (GS) complex composed of a catalytic subunit fksA and a regulatory subunit.

Its subcellular location is the mitochondrion. The protein localises to the cell membrane. The enzyme catalyses [(1-&gt;3)-beta-D-glucosyl](n) + UDP-alpha-D-glucose = [(1-&gt;3)-beta-D-glucosyl](n+1) + UDP + H(+). Its function is as follows. Catalytic subunit of the 1,3-beta-glucan synthase. Synthesizes 1,3-beta-glucan, a major structural component of the fungal cell wall. Involved in cell wall synthesis, maintenance and remodeling. In Aspergillus niger (strain ATCC MYA-4892 / CBS 513.88 / FGSC A1513), this protein is 1,3-beta-glucan synthase component FKS1.